The following is a 463-amino-acid chain: L-seryl-tRNA(Sec) selenium transferase (463 aa).

Lys295 carries the post-translational modification N6-(pyridoxal phosphate)lysine.

Belongs to the SelA family. Homodecamer; pentamer of dimers. Binds only one seryl-tRNA(Sec) per dimer. It depends on pyridoxal 5'-phosphate as a cofactor.

The protein localises to the cytoplasm. The catalysed reaction is L-seryl-tRNA(Sec) + selenophosphate + H(+) = L-selenocysteinyl-tRNA(Sec) + phosphate. It functions in the pathway aminoacyl-tRNA biosynthesis; selenocysteinyl-tRNA(Sec) biosynthesis; selenocysteinyl-tRNA(Sec) from L-seryl-tRNA(Sec) (bacterial route): step 1/1. Functionally, converts seryl-tRNA(Sec) to selenocysteinyl-tRNA(Sec) required for selenoprotein biosynthesis. In Salmonella schwarzengrund (strain CVM19633), this protein is L-seryl-tRNA(Sec) selenium transferase.